The following is a 77-amino-acid chain: Acyl carrier protein (77 aa).

Residues 2–77 (SNIEERVKKI…AAIDYVSKNQ (76 aa)) form the Carrier domain. Residue serine 37 is modified to O-(pantetheine 4'-phosphoryl)serine.

Belongs to the acyl carrier protein (ACP) family. Post-translationally, 4'-phosphopantetheine is transferred from CoA to a specific serine of apo-ACP by AcpS. This modification is essential for activity because fatty acids are bound in thioester linkage to the sulfhydryl of the prosthetic group.

Its subcellular location is the cytoplasm. The protein operates within lipid metabolism; fatty acid biosynthesis. In terms of biological role, carrier of the growing fatty acid chain in fatty acid biosynthesis. This chain is Acyl carrier protein, found in Shewanella oneidensis (strain ATCC 700550 / JCM 31522 / CIP 106686 / LMG 19005 / NCIMB 14063 / MR-1).